The sequence spans 478 residues: Catalase easC (478 aa).

Residue histidine 54 is part of the active site. Residue tyrosine 343 participates in heme binding. The interval valine 459–leucine 478 is disordered.

The protein belongs to the catalase family. It depends on heme as a cofactor.

Its pathway is alkaloid biosynthesis; ergot alkaloid biosynthesis. Functionally, catalase; part of the gene cluster that mediates the biosynthesis of fungal ergot alkaloid. DmaW catalyzes the first step of ergot alkaloid biosynthesis by condensing dimethylallyl diphosphate (DMAP) and tryptophan to form 4-dimethylallyl-L-tryptophan. The second step is catalyzed by the methyltransferase easF that methylates 4-dimethylallyl-L-tryptophan in the presence of S-adenosyl-L-methionine, resulting in the formation of 4-dimethylallyl-L-abrine. The catalase easC and the FAD-dependent oxidoreductase easE then transform 4-dimethylallyl-L-abrine to chanoclavine-I which is further oxidized by easD in the presence of NAD(+), resulting in the formation of chanoclavine-I aldehyde. Chanoclavine-I aldehyde is the precursor of ergoamides and ergopeptines in Clavicipitaceae, and clavine-type alcaloids such as fumiclavine in Trichocomaceae. However, the metabolites downstream of chanoclavine-I aldehyde in Arthrodermataceae have not been identified yet. In Trichophyton verrucosum (strain HKI 0517), this protein is Catalase easC.